Consider the following 503-residue polypeptide: Cobyric acid synthase (503 aa).

Residues 260–453 enclose the GATase cobBQ-type domain; it reads KIGVAAIYFP…FHALFDESSV (194 aa). The active-site Nucleophile is the Cys-341. The active site involves His-445.

The protein belongs to the CobB/CobQ family. CobQ subfamily.

The protein operates within cofactor biosynthesis; adenosylcobalamin biosynthesis. Its function is as follows. Catalyzes amidations at positions B, D, E, and G on adenosylcobyrinic A,C-diamide. NH(2) groups are provided by glutamine, and one molecule of ATP is hydrogenolyzed for each amidation. The protein is Cobyric acid synthase of Pelodictyon phaeoclathratiforme (strain DSM 5477 / BU-1).